A 239-amino-acid polypeptide reads, in one-letter code: Sugar fermentation stimulation protein homolog (239 aa).

It belongs to the SfsA family.

This is Sugar fermentation stimulation protein homolog from Synechococcus sp. (strain JA-3-3Ab) (Cyanobacteria bacterium Yellowstone A-Prime).